We begin with the raw amino-acid sequence, 737 residues long: Translation initiation factor IF-2 (737 aa).

The span at 69–80 shows a compositional bias: basic and acidic residues; it reads EKKEEKPIRKIM. Residues 69-130 form a disordered region; sequence EKKEEKPIRK…HKNKGKKKKG (62 aa). 2 stretches are compositionally biased toward basic residues: residues 95 to 108 and 121 to 130; these read NNKKAKFQQTKNKK and HKNKGKKKKG. The tr-type G domain occupies 237 to 404; sequence ERPPVITIMG…TILITAEILE (168 aa). The segment at 246-253 is G1; that stretch reads GHVDHGKT. Position 246–253 (246–253) interacts with GTP; sequence GHVDHGKT. Positions 271 to 275 are G2; it reads GITQK. The tract at residues 292-295 is G3; sequence DTPG. GTP-binding positions include 292 to 296 and 346 to 349; these read DTPGH and NKID. The segment at 346-349 is G4; sequence NKID. The segment at 382-384 is G5; the sequence is SAK.

Belongs to the TRAFAC class translation factor GTPase superfamily. Classic translation factor GTPase family. IF-2 subfamily.

It is found in the cytoplasm. One of the essential components for the initiation of protein synthesis. Protects formylmethionyl-tRNA from spontaneous hydrolysis and promotes its binding to the 30S ribosomal subunits. Also involved in the hydrolysis of GTP during the formation of the 70S ribosomal complex. This Fusobacterium nucleatum subsp. nucleatum (strain ATCC 25586 / DSM 15643 / BCRC 10681 / CIP 101130 / JCM 8532 / KCTC 2640 / LMG 13131 / VPI 4355) protein is Translation initiation factor IF-2.